A 688-amino-acid polypeptide reads, in one-letter code: Polyribonucleotide nucleotidyltransferase (688 aa).

Mg(2+) is bound by residues Asp484 and Asp490. The 60-residue stretch at 550 to 609 (PTTEIFNVAPDKIVEIIGQGGRVIKEIVEKFEVKIDLNKPSGEVKIMGNKERVLKTKEFI) folds into the KH domain. An S1 motif domain is found at 626 to 688 (DEVLEAQVKR…NKGKIALDLA (63 aa)).

Belongs to the polyribonucleotide nucleotidyltransferase family. Requires Mg(2+) as cofactor.

The protein resides in the cytoplasm. The catalysed reaction is RNA(n+1) + phosphate = RNA(n) + a ribonucleoside 5'-diphosphate. In terms of biological role, involved in mRNA degradation. Catalyzes the phosphorolysis of single-stranded polyribonucleotides processively in the 3'- to 5'-direction. In Helicobacter pylori (strain ATCC 700392 / 26695) (Campylobacter pylori), this protein is Polyribonucleotide nucleotidyltransferase.